The chain runs to 538 residues: Phosphoenolpyruvate carboxykinase (ATP) (538 aa).

Residues Arg-61, Tyr-195, and Lys-201 each coordinate substrate. Residues Lys-201, His-220, and 236–244 (GLSGTGKTT) each bind ATP. Lys-201 and His-220 together coordinate Mn(2+). Residue Asp-257 participates in Mn(2+) binding. ATP contacts are provided by Glu-285, Arg-323, and Thr-449. Arg-323 lines the substrate pocket.

This sequence belongs to the phosphoenolpyruvate carboxykinase (ATP) family. The cofactor is Mn(2+).

Its subcellular location is the cytoplasm. The enzyme catalyses oxaloacetate + ATP = phosphoenolpyruvate + ADP + CO2. Its pathway is carbohydrate biosynthesis; gluconeogenesis. Involved in the gluconeogenesis. Catalyzes the conversion of oxaloacetate (OAA) to phosphoenolpyruvate (PEP) through direct phosphoryl transfer between the nucleoside triphosphate and OAA. This Afipia carboxidovorans (strain ATCC 49405 / DSM 1227 / KCTC 32145 / OM5) (Oligotropha carboxidovorans) protein is Phosphoenolpyruvate carboxykinase (ATP).